Consider the following 308-residue polypeptide: Acetyl-coenzyme A carboxylase carboxyl transferase subunit beta 1 (308 aa).

Residues 25–294 enclose the CoA carboxyltransferase N-terminal domain; that stretch reads VWTKCTSCEQ…PMVVSVNESP (270 aa). Zn(2+) is bound by residues C29, C32, C48, and C51. The C4-type zinc-finger motif lies at 29 to 51; the sequence is CTSCEQVLYHAELERNLEVCPKC. Positions 289 to 308 are disordered; the sequence is SVNESPNEEPYSVPEADEKG.

This sequence belongs to the AccD/PCCB family. In terms of assembly, acetyl-CoA carboxylase is a heterohexamer composed of biotin carboxyl carrier protein (AccB), biotin carboxylase (AccC) and two subunits each of ACCase subunit alpha (AccA) and ACCase subunit beta (AccD). It depends on Zn(2+) as a cofactor.

It is found in the cytoplasm. It carries out the reaction N(6)-carboxybiotinyl-L-lysyl-[protein] + acetyl-CoA = N(6)-biotinyl-L-lysyl-[protein] + malonyl-CoA. It functions in the pathway lipid metabolism; malonyl-CoA biosynthesis; malonyl-CoA from acetyl-CoA: step 1/1. Component of the acetyl coenzyme A carboxylase (ACC) complex. Biotin carboxylase (BC) catalyzes the carboxylation of biotin on its carrier protein (BCCP) and then the CO(2) group is transferred by the transcarboxylase to acetyl-CoA to form malonyl-CoA. The chain is Acetyl-coenzyme A carboxylase carboxyl transferase subunit beta 1 from Vibrio campbellii (strain ATCC BAA-1116).